The primary structure comprises 525 residues: GMP synthase [glutamine-hydrolyzing] (525 aa).

The Glutamine amidotransferase type-1 domain occupies 9–207; sequence RILILDFGSQ…VSDICGCEKQ (199 aa). Cys86 acts as the Nucleophile in catalysis. Active-site residues include His181 and Glu183. Residues 208 to 400 form the GMPS ATP-PPase domain; the sequence is WTPAKIIDDA…LGLPYNMLYR (193 aa). 235-241 contacts ATP; the sequence is SGGVDSS.

As to quaternary structure, homodimer.

The enzyme catalyses XMP + L-glutamine + ATP + H2O = GMP + L-glutamate + AMP + diphosphate + 2 H(+). Its pathway is purine metabolism; GMP biosynthesis; GMP from XMP (L-Gln route): step 1/1. In terms of biological role, catalyzes the synthesis of GMP from XMP. The protein is GMP synthase [glutamine-hydrolyzing] of Idiomarina loihiensis (strain ATCC BAA-735 / DSM 15497 / L2-TR).